Here is a 188-residue protein sequence, read N- to C-terminus: Elongation factor P (188 aa).

It belongs to the elongation factor P family.

Its subcellular location is the cytoplasm. It functions in the pathway protein biosynthesis; polypeptide chain elongation. Involved in peptide bond synthesis. Stimulates efficient translation and peptide-bond synthesis on native or reconstituted 70S ribosomes in vitro. Probably functions indirectly by altering the affinity of the ribosome for aminoacyl-tRNA, thus increasing their reactivity as acceptors for peptidyl transferase. This chain is Elongation factor P, found in Exiguobacterium sibiricum (strain DSM 17290 / CCUG 55495 / CIP 109462 / JCM 13490 / 255-15).